The chain runs to 156 residues: Translation initiation factor IF-1, chloroplastic (156 aa).

The transit peptide at 1 to 81 (MASLSWWNPA…RRTTSIQCLS (81 aa)) directs the protein to the chloroplast. The interval 51-79 (KSLLVKTQQQSKKKKNNSTNSRRTTSIQC) is disordered. Residues 67–76 (NSTNSRRTTS) are compositionally biased toward low complexity. One can recognise an S1-like domain in the interval 82 to 151 (QEQKWTHEGS…SKGRIIYRLR (70 aa)).

This sequence belongs to the IF-1 family. Component of the 30S ribosomal translation pre-initiation complex which assembles on the 30S ribosome in the order IF-2 and IF-3, IF-1 and N-formylmethionyl-tRNA(fMet); mRNA recruitment can occur at any time during PIC assembly.

It is found in the plastid. The protein localises to the chloroplast. Functionally, one of the essential components for the initiation of protein synthesis. Stabilizes the binding of IF-2 and IF-3 on the 30S subunit to which N-formylmethionyl-tRNA(fMet) subsequently binds. Helps modulate mRNA selection, yielding the 30S pre-initiation complex (PIC). Upon addition of the 50S ribosomal subunit IF-1, IF-2 and IF-3 are released leaving the mature 70S translation initiation complex. The sequence is that of Translation initiation factor IF-1, chloroplastic (infA) from Solanum lycopersicum (Tomato).